Here is a 441-residue protein sequence, read N- to C-terminus: tRNA-2-methylthio-N(6)-dimethylallyladenosine synthase (441 aa).

One can recognise an MTTase N-terminal domain in the interval 2–117 (KGLYIKSYGC…LPELLVKAHR (116 aa)). [4Fe-4S] cluster contacts are provided by Cys11, Cys47, Cys80, Cys157, Cys161, and Cys164. One can recognise a Radical SAM core domain in the interval 143-374 (KNQETSAFIS…QKLLREQQLA (232 aa)).

The protein belongs to the methylthiotransferase family. MiaB subfamily. In terms of assembly, monomer. Requires [4Fe-4S] cluster as cofactor.

It localises to the cytoplasm. The enzyme catalyses N(6)-dimethylallyladenosine(37) in tRNA + (sulfur carrier)-SH + AH2 + 2 S-adenosyl-L-methionine = 2-methylsulfanyl-N(6)-dimethylallyladenosine(37) in tRNA + (sulfur carrier)-H + 5'-deoxyadenosine + L-methionine + A + S-adenosyl-L-homocysteine + 2 H(+). Functionally, catalyzes the methylthiolation of N6-(dimethylallyl)adenosine (i(6)A), leading to the formation of 2-methylthio-N6-(dimethylallyl)adenosine (ms(2)i(6)A) at position 37 in tRNAs that read codons beginning with uridine. The protein is tRNA-2-methylthio-N(6)-dimethylallyladenosine synthase of Ehrlichia canis (strain Jake).